Consider the following 118-residue polypeptide: Ribonuclease P protein component (118 aa).

The protein belongs to the RnpA family. In terms of assembly, consists of a catalytic RNA component (M1 or rnpB) and a protein subunit.

The catalysed reaction is Endonucleolytic cleavage of RNA, removing 5'-extranucleotides from tRNA precursor.. Its function is as follows. RNaseP catalyzes the removal of the 5'-leader sequence from pre-tRNA to produce the mature 5'-terminus. It can also cleave other RNA substrates such as 4.5S RNA. The protein component plays an auxiliary but essential role in vivo by binding to the 5'-leader sequence and broadening the substrate specificity of the ribozyme. This is Ribonuclease P protein component from Petrotoga mobilis (strain DSM 10674 / SJ95).